We begin with the raw amino-acid sequence, 475 residues long: ATP synthase subunit beta (475 aa).

154–161 is a binding site for ATP; the sequence is GGAGVGKT.

Belongs to the ATPase alpha/beta chains family. As to quaternary structure, F-type ATPases have 2 components, CF(1) - the catalytic core - and CF(0) - the membrane proton channel. CF(1) has five subunits: alpha(3), beta(3), gamma(1), delta(1), epsilon(1). CF(0) has three main subunits: a(1), b(2) and c(9-12). The alpha and beta chains form an alternating ring which encloses part of the gamma chain. CF(1) is attached to CF(0) by a central stalk formed by the gamma and epsilon chains, while a peripheral stalk is formed by the delta and b chains.

The protein localises to the cell inner membrane. The enzyme catalyses ATP + H2O + 4 H(+)(in) = ADP + phosphate + 5 H(+)(out). Produces ATP from ADP in the presence of a proton gradient across the membrane. The catalytic sites are hosted primarily by the beta subunits. This is ATP synthase subunit beta from Hyphomonas neptunium (strain ATCC 15444).